The chain runs to 269 residues: Hemin import ATP-binding protein HmuV (269 aa).

An ABC transporter domain is found at 2 to 242; the sequence is LEVIHTGLNI…AMVEACFDLP (241 aa). 34 to 41 contacts ATP; sequence GPNGAGKS.

The protein belongs to the ABC transporter superfamily. Heme (hemin) importer (TC 3.A.1.14.5) family. In terms of assembly, the complex is composed of two ATP-binding proteins (HmuV), two transmembrane proteins (HmuU) and a solute-binding protein (HmuT).

The protein resides in the cell inner membrane. In terms of biological role, part of the ABC transporter complex HmuTUV involved in hemin import. Responsible for energy coupling to the transport system. The protein is Hemin import ATP-binding protein HmuV of Methylobacillus flagellatus (strain ATCC 51484 / DSM 6875 / VKM B-1610 / KT).